A 399-amino-acid polypeptide reads, in one-letter code: Elongation factor Tu (399 aa).

Residues 10–209 enclose the tr-type G domain; sequence KPHVNIGTIG…EVDRYIPTPE (200 aa). The segment at 19-26 is G1; sequence GHVDHGKT. 19–26 provides a ligand contact to GTP; that stretch reads GHVDHGKT. Residue Thr26 participates in Mg(2+) binding. The interval 60–64 is G2; it reads GITIA. The tract at residues 81-84 is G3; the sequence is DCPG. Residues 81–85 and 136–139 each bind GTP; these read DCPGH and NKED. The G4 stretch occupies residues 136 to 139; it reads NKED. Residues 174 to 176 are G5; that stretch reads SAL.

Belongs to the TRAFAC class translation factor GTPase superfamily. Classic translation factor GTPase family. EF-Tu/EF-1A subfamily. As to quaternary structure, monomer.

It is found in the cytoplasm. The enzyme catalyses GTP + H2O = GDP + phosphate + H(+). GTP hydrolase that promotes the GTP-dependent binding of aminoacyl-tRNA to the A-site of ribosomes during protein biosynthesis. The chain is Elongation factor Tu from Wolinella succinogenes (strain ATCC 29543 / DSM 1740 / CCUG 13145 / JCM 31913 / LMG 7466 / NCTC 11488 / FDC 602W) (Vibrio succinogenes).